The sequence spans 177 residues: uncharacterized protein (177 aa).

It to B.subtilis YutG.

This is an uncharacterized protein from Bacillus subtilis (strain 168).